We begin with the raw amino-acid sequence, 203 residues long: Formate hydrogenlyase subunit 2 (203 aa).

4 4Fe-4S ferredoxin-type domains span residues 2-32 (NRFV…HGLQ), 42-72 (NEKE…TRVD), 73-102 (GAVQ…FSGS), and 137-169 (RAIA…LVDN). [4Fe-4S] cluster contacts are provided by C12, C15, C18, C22, C51, C54, C59, C63, C82, C85, C88, C92, C143, C146, C155, and C159.

As to quaternary structure, FHL comprises of a formate dehydrogenase, unidentified electron carriers and a hydrogenase (isoenzyme 3). In this non-energy conserving pathway, molecular hydrogen and carbodioxide are released from formate. [4Fe-4S] cluster serves as cofactor.

Its function is as follows. Probable electron transfer protein for hydrogenase 3. In Escherichia coli (strain K12), this protein is Formate hydrogenlyase subunit 2 (hycB).